A 324-amino-acid polypeptide reads, in one-letter code: Probable peptidylglycine alpha-hydroxylating monooxygenase 1 (324 aa).

The first 22 residues, 1-22, serve as a signal peptide directing secretion; sequence MPRFYLLSSCALLAFATSFCNA. 2 disulfides stabilise this stretch: Cys41-Cys85 and Cys73-Cys101. Cu cation contacts are provided by His66 and His67. His142 provides a ligand contact to Cu cation. The N-linked (GlcNAc...) asparagine glycan is linked to Asn182. Cu cation-binding residues include His207, His209, and Met284. Cys264 and Cys285 are oxidised to a cystine.

Belongs to the copper type II ascorbate-dependent monooxygenase family. Cu(2+) is required as a cofactor.

Its subcellular location is the secreted. It carries out the reaction a [peptide]-C-terminal glycine + 2 L-ascorbate + O2 = a [peptide]-C-terminal (2S)-2-hydroxyglycine + 2 monodehydro-L-ascorbate radical + H2O. In terms of biological role, monooxygenase that catalyzes an essential reaction in C-terminal alpha-amidation of peptides. Produces an unstable peptidyl(2-hydroxyglycine) intermediate. C-terminal amidation of peptides such as neuropeptides is essential for full biological activity. This chain is Probable peptidylglycine alpha-hydroxylating monooxygenase 1, found in Caenorhabditis elegans.